A 253-amino-acid chain; its full sequence is Sulfate transporter CysZ (253 aa).

The next 4 helical transmembrane spans lie at 31–51, 75–95, 151–171, and 222–242; these read FVIL…WWLF, LLWP…FSTI, IVLL…PVLW, and IPLL…AMWV.

Belongs to the CysZ family.

The protein localises to the cell inner membrane. High affinity, high specificity proton-dependent sulfate transporter, which mediates sulfate uptake. Provides the sulfur source for the cysteine synthesis pathway. The sequence is that of Sulfate transporter CysZ from Shigella flexneri serotype 5b (strain 8401).